Consider the following 103-residue polypeptide: Cell division protein FtsB (103 aa).

Over 1–3 the chain is Cytoplasmic; the sequence is MGK. The helical transmembrane segment at 4-21 threads the bilayer; sequence LTLLLLAILVWLQYSLWF. The Periplasmic segment spans residues 22–103; the sequence is GKNGIHDYTR…RAQSAGQNNR (82 aa). Positions 28–71 form a coiled coil; that stretch reads DYTRVNDDVAALQATNAKLKARNDQLFAEIDDLNGGQEALEERA.

Belongs to the FtsB family. Part of a complex composed of FtsB, FtsL and FtsQ.

Its subcellular location is the cell inner membrane. In terms of biological role, essential cell division protein. May link together the upstream cell division proteins, which are predominantly cytoplasmic, with the downstream cell division proteins, which are predominantly periplasmic. In Shigella flexneri serotype 5b (strain 8401), this protein is Cell division protein FtsB.